We begin with the raw amino-acid sequence, 252 residues long: 2-succinyl-6-hydroxy-2,4-cyclohexadiene-1-carboxylate synthase (252 aa).

This sequence belongs to the AB hydrolase superfamily. MenH family. In terms of assembly, monomer.

The enzyme catalyses 5-enolpyruvoyl-6-hydroxy-2-succinyl-cyclohex-3-ene-1-carboxylate = (1R,6R)-6-hydroxy-2-succinyl-cyclohexa-2,4-diene-1-carboxylate + pyruvate. It participates in quinol/quinone metabolism; 1,4-dihydroxy-2-naphthoate biosynthesis; 1,4-dihydroxy-2-naphthoate from chorismate: step 3/7. The protein operates within quinol/quinone metabolism; menaquinone biosynthesis. In terms of biological role, catalyzes a proton abstraction reaction that results in 2,5-elimination of pyruvate from 2-succinyl-5-enolpyruvyl-6-hydroxy-3-cyclohexene-1-carboxylate (SEPHCHC) and the formation of 2-succinyl-6-hydroxy-2,4-cyclohexadiene-1-carboxylate (SHCHC). This is 2-succinyl-6-hydroxy-2,4-cyclohexadiene-1-carboxylate synthase from Shigella boydii serotype 4 (strain Sb227).